Reading from the N-terminus, the 134-residue chain is Small ribosomal subunit protein bS16 (134 aa).

The segment at 79 to 134 (AGIAKRPSRNNPTKGEPGKKAQERLALAKQAEEEASAKAAEAAAAAAAPAEEAASE) is disordered. Low complexity predominate over residues 115–134 (AKAAEAAAAAAAPAEEAASE).

It belongs to the bacterial ribosomal protein bS16 family.

The polypeptide is Small ribosomal subunit protein bS16 (Brucella abortus (strain S19)).